We begin with the raw amino-acid sequence, 420 residues long: ATP phosphoribosyltransferase regulatory subunit (420 aa).

The protein belongs to the class-II aminoacyl-tRNA synthetase family. HisZ subfamily. In terms of assembly, heteromultimer composed of HisG and HisZ subunits.

It is found in the cytoplasm. Its pathway is amino-acid biosynthesis; L-histidine biosynthesis; L-histidine from 5-phospho-alpha-D-ribose 1-diphosphate: step 1/9. Its function is as follows. Required for the first step of histidine biosynthesis. May allow the feedback regulation of ATP phosphoribosyltransferase activity by histidine. In Bacillus cereus (strain ATCC 10987 / NRS 248), this protein is ATP phosphoribosyltransferase regulatory subunit.